The following is a 130-amino-acid chain: Small ribosomal subunit protein uS8 (130 aa).

The protein belongs to the universal ribosomal protein uS8 family. As to quaternary structure, part of the 30S ribosomal subunit. Contacts proteins S5 and S12.

One of the primary rRNA binding proteins, it binds directly to 16S rRNA central domain where it helps coordinate assembly of the platform of the 30S subunit. The chain is Small ribosomal subunit protein uS8 from Neisseria meningitidis serogroup C (strain 053442).